Here is a 308-residue protein sequence, read N- to C-terminus: Uridylate cyclase (308 aa).

Mn(2+) is bound by residues D62 and D106.

The protein belongs to the adenylyl cyclase class-4/guanylyl cyclase family. Pyrimidine cyclase subfamily. In terms of assembly, homodimer. It depends on Mn(2+) as a cofactor.

The protein resides in the cytoplasm. It catalyses the reaction GTP = 3',5'-cyclic GMP + diphosphate. It carries out the reaction UTP = 3',5'-cyclic UMP + diphosphate. Pycsar (pyrimidine cyclase system for antiphage resistance) provides immunity against bacteriophage. The pyrimidine cyclase (PycC) synthesizes cyclic nucleotides in response to infection; these serve as specific second messenger signals. The signals activate the adjacent effector, leading to bacterial cell death and abortive phage infection. A clade D Pycsar system. Its function is as follows. The pyrimidine cyclase gene of a two-gene Pycsar system, generates cyclic UMP (cUMP) from UTP as well as cGMP from GTP to a lesser extent, has little to no activity on ATP or CTP. Expression of this and adjacent effector PtPycTM (AC A0A4Q9KQH5) probably confers resistance to bacteriophage. The genes are probably only expressed in response to bacteriophage infection. This chain is Uridylate cyclase, found in Propioniciclava tarda.